A 258-amino-acid chain; its full sequence is Thrombin-like enzyme saxthrombin (258 aa).

The first 18 residues, 1–18, serve as a signal peptide directing secretion; the sequence is MVLIRVLANLLILQLSYA. A propeptide spanning residues 19-24 is cleaved from the precursor; sequence QKSSEL. Residues 25–249 form the Peptidase S1 domain; that stretch reads VIGGDECNIN…YNHWIQSIIA (225 aa). 6 cysteine pairs are disulfide-bonded: Cys-31-Cys-163, Cys-50-Cys-66, Cys-98-Cys-256, Cys-142-Cys-210, Cys-174-Cys-189, and Cys-200-Cys-225. The N-linked (GlcNAc...) asparagine glycan is linked to Asn-44. Catalysis depends on charge relay system residues His-65 and Asp-110. The Charge relay system role is filled by Ser-204. Asn-251 carries N-linked (GlcNAc...) asparagine glycosylation.

This sequence belongs to the peptidase S1 family. Snake venom subfamily. As to quaternary structure, monomer. As to expression, expressed by the venom gland.

It is found in the secreted. Its function is as follows. Thrombin-like snake venom serine protease that shows strong blood coagulation activity in vitro. The protein is Thrombin-like enzyme saxthrombin of Gloydius intermedius (Central Asian pit viper).